The primary structure comprises 344 residues: Holliday junction branch migration complex subunit RuvB (344 aa).

Positions 1–182 (MRIEALNTAP…FGINSRLDYY (182 aa)) are large ATPase domain (RuvB-L). ATP is bound by residues Ile-21, Arg-22, Gly-63, Lys-66, Thr-67, Thr-68, 129 to 131 (EDY), Arg-172, Tyr-182, and Arg-219. Thr-67 contributes to the Mg(2+) binding site. The segment at 183–253 (NPELLQSIII…VARRTLESLE (71 aa)) is small ATPAse domain (RuvB-S). Residues 256–344 (EGGLDDMDKK…GSLFDTAEDG (89 aa)) form a head domain (RuvB-H) region. Residues Arg-311 and Arg-316 each contribute to the DNA site.

Belongs to the RuvB family. As to quaternary structure, homohexamer. Forms an RuvA(8)-RuvB(12)-Holliday junction (HJ) complex. HJ DNA is sandwiched between 2 RuvA tetramers; dsDNA enters through RuvA and exits via RuvB. An RuvB hexamer assembles on each DNA strand where it exits the tetramer. Each RuvB hexamer is contacted by two RuvA subunits (via domain III) on 2 adjacent RuvB subunits; this complex drives branch migration. In the full resolvosome a probable DNA-RuvA(4)-RuvB(12)-RuvC(2) complex forms which resolves the HJ.

The protein resides in the cytoplasm. It catalyses the reaction ATP + H2O = ADP + phosphate + H(+). Functionally, the RuvA-RuvB-RuvC complex processes Holliday junction (HJ) DNA during genetic recombination and DNA repair, while the RuvA-RuvB complex plays an important role in the rescue of blocked DNA replication forks via replication fork reversal (RFR). RuvA specifically binds to HJ cruciform DNA, conferring on it an open structure. The RuvB hexamer acts as an ATP-dependent pump, pulling dsDNA into and through the RuvAB complex. RuvB forms 2 homohexamers on either side of HJ DNA bound by 1 or 2 RuvA tetramers; 4 subunits per hexamer contact DNA at a time. Coordinated motions by a converter formed by DNA-disengaged RuvB subunits stimulates ATP hydrolysis and nucleotide exchange. Immobilization of the converter enables RuvB to convert the ATP-contained energy into a lever motion, pulling 2 nucleotides of DNA out of the RuvA tetramer per ATP hydrolyzed, thus driving DNA branch migration. The RuvB motors rotate together with the DNA substrate, which together with the progressing nucleotide cycle form the mechanistic basis for DNA recombination by continuous HJ branch migration. Branch migration allows RuvC to scan DNA until it finds its consensus sequence, where it cleaves and resolves cruciform DNA. This is Holliday junction branch migration complex subunit RuvB from Chlorobaculum tepidum (strain ATCC 49652 / DSM 12025 / NBRC 103806 / TLS) (Chlorobium tepidum).